Consider the following 420-residue polypeptide: Aminoacyltransferase FemA (420 aa).

Belongs to the FemABX family. In terms of assembly, homodimer. Interacts with FemB.

The protein localises to the cytoplasm. The enzyme catalyses beta-D-GlcNAc-(1-&gt;4)-Mur2Ac(oyl-L-Ala-D-isoglutaminyl-L-Lys-(N(6)-Gly)-D-Ala-D-Ala)-di-trans,octa-cis-undecaprenyl diphosphate + 2 glycyl-tRNA(Gly) = MurNAc-L-Ala-D-isoglutaminyl-L-Lys-(N(6)-tri-Gly)-D-Ala-D-Ala-diphospho-di-trans,octa-cis-undecaprenyl-GlcNAc + 2 tRNA(Gly) + 2 H(+). In terms of biological role, catalyzes the formation of the pentaglycine interpeptide bridge, which is characteristic of the S.aureus peptidoglycan. Adds glycines 2 and 3 of the pentaglycine bridge, using glycyl-tRNA(Gly) as donor. Involved in resistance to methicillin. The polypeptide is Aminoacyltransferase FemA (femA) (Staphylococcus aureus (strain NCTC 8325 / PS 47)).